The primary structure comprises 153 residues: Large ribosomal subunit protein uL13 (153 aa).

Belongs to the universal ribosomal protein uL13 family. In terms of assembly, part of the 50S ribosomal subunit.

Functionally, this protein is one of the early assembly proteins of the 50S ribosomal subunit, although it is not seen to bind rRNA by itself. It is important during the early stages of 50S assembly. In Xanthobacter autotrophicus (strain ATCC BAA-1158 / Py2), this protein is Large ribosomal subunit protein uL13.